The sequence spans 324 residues: tRNA dimethylallyltransferase (324 aa).

17-24 serves as a coordination point for ATP; it reads GPTASGKT. 19–24 contributes to the substrate binding site; it reads TASGKT. Interaction with substrate tRNA stretches follow at residues 42 to 45, 166 to 170, 251 to 256, and 284 to 291; these read DSAL, QRIQR, RCVGYR, and KRQITWLR.

Belongs to the IPP transferase family. As to quaternary structure, monomer. It depends on Mg(2+) as a cofactor.

The enzyme catalyses adenosine(37) in tRNA + dimethylallyl diphosphate = N(6)-dimethylallyladenosine(37) in tRNA + diphosphate. Catalyzes the transfer of a dimethylallyl group onto the adenine at position 37 in tRNAs that read codons beginning with uridine, leading to the formation of N6-(dimethylallyl)adenosine (i(6)A). This is tRNA dimethylallyltransferase from Burkholderia vietnamiensis (strain G4 / LMG 22486) (Burkholderia cepacia (strain R1808)).